The following is a 363-amino-acid chain: S-adenosylmethionine:tRNA ribosyltransferase-isomerase (363 aa).

It belongs to the QueA family. In terms of assembly, monomer.

It is found in the cytoplasm. The enzyme catalyses 7-aminomethyl-7-carbaguanosine(34) in tRNA + S-adenosyl-L-methionine = epoxyqueuosine(34) in tRNA + adenine + L-methionine + 2 H(+). The protein operates within tRNA modification; tRNA-queuosine biosynthesis. In terms of biological role, transfers and isomerizes the ribose moiety from AdoMet to the 7-aminomethyl group of 7-deazaguanine (preQ1-tRNA) to give epoxyqueuosine (oQ-tRNA). This Brucella anthropi (strain ATCC 49188 / DSM 6882 / CCUG 24695 / JCM 21032 / LMG 3331 / NBRC 15819 / NCTC 12168 / Alc 37) (Ochrobactrum anthropi) protein is S-adenosylmethionine:tRNA ribosyltransferase-isomerase.